We begin with the raw amino-acid sequence, 413 residues long: Cell division protein FtsZ 2 (413 aa).

GTP contacts are provided by residues 132–134 (GTG), glutamate 171, arginine 175, and aspartate 218.

The protein belongs to the FtsZ family. As to quaternary structure, homodimer. Polymerizes to form a dynamic ring structure in a strictly GTP-dependent manner. Interacts directly with several other division proteins.

The protein resides in the cytoplasm. Essential cell division protein that forms a contractile ring structure (Z ring) at the future cell division site. The regulation of the ring assembly controls the timing and the location of cell division. One of the functions of the FtsZ ring is to recruit other cell division proteins to the septum to produce a new cell wall between the dividing cells. Binds GTP and shows GTPase activity. This is Cell division protein FtsZ 2 from Thermococcus kodakarensis (strain ATCC BAA-918 / JCM 12380 / KOD1) (Pyrococcus kodakaraensis (strain KOD1)).